Consider the following 499-residue polypeptide: WD repeat-containing protein 55 homolog (499 aa).

The segment at 1-130 is disordered; that stretch reads MHTHNNFKTP…EATFDLDVDD (130 aa). Acidic residues-rich tracts occupy residues 12 to 23 and 31 to 48; these read DEDELDDLDEDM and IEQE…EYDL. Low complexity predominate over residues 91–103; sequence DDAGGASAGGATS. Polar residues predominate over residues 113 to 122; that stretch reads PSGSNRQSEA. 6 WD repeats span residues 154 to 193, 198 to 237, 241 to 279, 282 to 321, 324 to 363, and 408 to 447; these read KLED…NKLL, VHSK…LKKL, AHDD…AIFE, ELED…MYVQ, PYEE…YHCD, and QHNM…DFGD. Positions 480–499 are disordered; it reads TKEDADDDDHDPSAGPSNMA.

Belongs to the WD repeat WDR55 family.

This is WD repeat-containing protein 55 homolog from Drosophila yakuba (Fruit fly).